The following is a 288-amino-acid chain: Diaminopimelate epimerase (288 aa).

Substrate-binding residues include asparagine 13, glutamine 46, and asparagine 66. Cysteine 75 acts as the Proton donor in catalysis. Substrate-binding positions include 76-77, asparagine 166, asparagine 199, and 217-218; these read GN and ER. Catalysis depends on cysteine 226, which acts as the Proton acceptor. 227–228 serves as a coordination point for substrate; it reads GT.

Belongs to the diaminopimelate epimerase family. Homodimer.

It is found in the cytoplasm. The catalysed reaction is (2S,6S)-2,6-diaminopimelate = meso-2,6-diaminopimelate. It functions in the pathway amino-acid biosynthesis; L-lysine biosynthesis via DAP pathway; DL-2,6-diaminopimelate from LL-2,6-diaminopimelate: step 1/1. In terms of biological role, catalyzes the stereoinversion of LL-2,6-diaminopimelate (L,L-DAP) to meso-diaminopimelate (meso-DAP), a precursor of L-lysine and an essential component of the bacterial peptidoglycan. This is Diaminopimelate epimerase from Cupriavidus metallidurans (strain ATCC 43123 / DSM 2839 / NBRC 102507 / CH34) (Ralstonia metallidurans).